A 511-amino-acid chain; its full sequence is Rab proteins geranylgeranyltransferase component A (511 aa).

It belongs to the Rab GDI family.

It localises to the cytoplasm. Its subcellular location is the perinuclear region. The protein localises to the cytoskeleton. It is found in the spindle pole. In terms of biological role, binds unprenylated Rab proteins, presents it to the catalytic component B, and remains bound to it after the geranylgeranyl transfer reaction. The component A is thought to be regenerated by transferring its prenylated Rab to a protein acceptor. In Drosophila melanogaster (Fruit fly), this protein is Rab proteins geranylgeranyltransferase component A.